An 89-amino-acid chain; its full sequence is Teretoxin Tan6.8 (89 aa).

Residues 1 to 21 form the signal peptide; that stretch reads MRLLLILLLLTPVILAGSLDE. The disordered stretch occupies residues 22-42; the sequence is EPNNADGANAASFTADQEGRH. A propeptide spanning residues 22–44 is cleaved from the precursor; that stretch reads EPNNADGANAASFTADQEGRHKR.

In terms of processing, contains 3 disulfide bonds. In terms of tissue distribution, expressed by the venom duct.

It is found in the secreted. The protein is Teretoxin Tan6.8 of Terebra anilis (Auger snail).